The following is a 247-amino-acid chain: MRWKMKARVLSNRRIASEVYEMTFEWKGKKPHPGQFLMIDCQGKTFLKRPFSVNDFEEEKMTILYQVRGEGTKNLSQMKEGDILEITGPHGNGFEILEGKRVLIVGGGVGIAPLLYLAKKVKAQKLYIALGFKRETFLVEKFEGLGEVVVTTEEGSTGRKGLVTSVVEEMIGEVDIVYGCGPKPMLKALQEISMKANVLCQISLEEKMACGIGACLGCACKVREDKGFSYKRVCRDGPVFWAEEVLF.

The FAD-binding FR-type domain maps to 2-96 (RWKMKARVLS…TGPHGNGFEI (95 aa)). FAD is bound by residues 49–52 (RPFS), 64–66 (LYQ), and 71–72 (GT). 4 residues coordinate [2Fe-2S] cluster: Cys-210, Cys-215, Cys-218, and Cys-234.

This sequence belongs to the PyrK family. Heterotetramer of 2 PyrK and 2 PyrD type B subunits. The cofactor is [2Fe-2S] cluster. FAD is required as a cofactor.

It participates in pyrimidine metabolism; UMP biosynthesis via de novo pathway; orotate from (S)-dihydroorotate (NAD(+) route): step 1/1. Its function is as follows. Responsible for channeling the electrons from the oxidation of dihydroorotate from the FMN redox center in the PyrD type B subunit to the ultimate electron acceptor NAD(+). The polypeptide is Dihydroorotate dehydrogenase B (NAD(+)), electron transfer subunit (Caldanaerobacter subterraneus subsp. tengcongensis (strain DSM 15242 / JCM 11007 / NBRC 100824 / MB4) (Thermoanaerobacter tengcongensis)).